Consider the following 1215-residue polypeptide: DNA-directed RNA polymerase subunit beta' (1215 aa).

Residues C60, C62, C75, and C78 each coordinate Zn(2+). Residues D450, D452, and D454 each contribute to the Mg(2+) site. The Zn(2+) site is built by C819, C893, C900, and C903.

It belongs to the RNA polymerase beta' chain family. The RNAP catalytic core consists of 2 alpha, 1 beta, 1 beta' and 1 omega subunit. When a sigma factor is associated with the core the holoenzyme is formed, which can initiate transcription. Mg(2+) serves as cofactor. Zn(2+) is required as a cofactor.

It carries out the reaction RNA(n) + a ribonucleoside 5'-triphosphate = RNA(n+1) + diphosphate. In terms of biological role, DNA-dependent RNA polymerase catalyzes the transcription of DNA into RNA using the four ribonucleoside triphosphates as substrates. This is DNA-directed RNA polymerase subunit beta' from Levilactobacillus brevis (strain ATCC 367 / BCRC 12310 / CIP 105137 / JCM 1170 / LMG 11437 / NCIMB 947 / NCTC 947) (Lactobacillus brevis).